The sequence spans 253 residues: 3-deoxy-manno-octulosonate cytidylyltransferase (253 aa).

Belongs to the KdsB family.

It localises to the cytoplasm. The enzyme catalyses 3-deoxy-alpha-D-manno-oct-2-ulosonate + CTP = CMP-3-deoxy-beta-D-manno-octulosonate + diphosphate. The protein operates within nucleotide-sugar biosynthesis; CMP-3-deoxy-D-manno-octulosonate biosynthesis; CMP-3-deoxy-D-manno-octulosonate from 3-deoxy-D-manno-octulosonate and CTP: step 1/1. It participates in bacterial outer membrane biogenesis; lipopolysaccharide biosynthesis. Functionally, activates KDO (a required 8-carbon sugar) for incorporation into bacterial lipopolysaccharide in Gram-negative bacteria. The protein is 3-deoxy-manno-octulosonate cytidylyltransferase of Neisseria meningitidis serogroup C (strain 053442).